Consider the following 376-residue polypeptide: Proteasome-interacting protein CIC1 (376 aa).

2 disordered regions span residues 1 to 29 (MAKK…KKSS) and 356 to 376 (RSSS…KAKS). The segment at 310–376 (ETHEDDMVTI…ESEAVKKAKS (67 aa)) is required for interaction with CDC4. The segment covering 357–376 (SSSELEKESSESEAVKKAKS) has biased composition (basic and acidic residues).

In terms of assembly, interacts with CDC4, PRE4, PRE6, RPT1 and SCL1 as part of the fully assembled 26S proteasome. Interacts with pre-ribosomal particles constituent NOP7.

Its subcellular location is the nucleus. The protein resides in the nucleolus. Its function is as follows. An adapter protein that specifically links the 26S proteasome to its substrate CDC4 which is one of the substrate recognition subunits of the SCF E3 ubiquitin ligase complex. Required for turnover of cell cycle regulatory proteins CDC4 and GRR1. Required for synthesis and nuclear export of 60S ribosomal subunits. Required for vegetative growth. This Saccharomyces cerevisiae (strain ATCC 204508 / S288c) (Baker's yeast) protein is Proteasome-interacting protein CIC1 (CIC1).